The sequence spans 142 residues: Hemoglobin subunit alpha-1 (142 aa).

In terms of domain architecture, Globin spans 2-142 (VLSPADKTNV…VSTVLTSKYR (141 aa)). Position 59 (H59) interacts with O2. A heme b-binding site is contributed by H88.

Belongs to the globin family. As to quaternary structure, heterotetramer of two alpha chains and two beta chains. As to expression, red blood cells.

Its function is as follows. Involved in oxygen transport from the lung to the various peripheral tissues. Hemopressin acts as an antagonist peptide of the cannabinoid receptor CNR1. Hemopressin-binding efficiently blocks cannabinoid receptor CNR1 and subsequent signaling. The polypeptide is Hemoglobin subunit alpha-1 (HBA1) (Hylobates lar (Lar gibbon)).